We begin with the raw amino-acid sequence, 463 residues long: Rubisco accumulation factor 1, chloroplastic (463 aa).

Residues 1-18 show a composition bias toward low complexity; the sequence is MLSLSHPHPHPAASTTAP. Residues 1–31 constitute a chloroplast transit peptide; sequence MLSLSHPHPHPAASTTAPRHQRTAPVWHRRR. Residues 1–84 form a disordered region; that stretch reads MLSLSHPHPH…PFHPPPSPLP (84 aa). Residues 19–33 show a composition bias toward basic residues; that stretch reads RHQRTAPVWHRRRAS. Over residues 43-53 the composition is skewed to gly residues; sequence PGGGSTGGRGG. An N-terminal alpha-helix region spans residues 83–275; that stretch reads LPPSLRNLDL…SGRARVELEL (193 aa). Residues 240–294 are a coiled coil; that stretch reads RQSREAIDVQDRVAELERALQVVETESGRARVELELERARRKAAGEEEVDEEGEE. The C-terminal beta sheet stretch occupies residues 305 to 450; that stretch reads VTVVRLRYGE…AEVVIVVRPP (146 aa).

The protein belongs to the RAF family. In terms of assembly, homotrimer. As to expression, expressed in bundle sheath.

It is found in the plastid. The protein resides in the chloroplast. In terms of biological role, required for assembly or stability of RuBisCO. Acts at a postchaperonin step to fold and/or assemble the large subunit (LS) into RuBisCO. This Zea mays (Maize) protein is Rubisco accumulation factor 1, chloroplastic.